Reading from the N-terminus, the 347-residue chain is uncharacterized protein (347 aa).

10 consecutive transmembrane segments (helical) span residues 15–35 (FVPSWFAAVMGTGILAVDSLL), 46–66 (VAVGLFYFNVLLFFIFLVPWV), 84–104 (VLSAFYPTIAVSCLVLGADFI), 111–131 (FWGGVFWTLGAIGMFLFSLIV), 149–169 (GWYIPPVGLIVIPIAGSLIMP), 182–202 (INYFGWGAGFFLYLALLAVVI), 214–234 (AMAPTVWINLGPIGAGIVALI), 249–269 (FYIFSFIFWGFGLWWSLMAII), 283–303 (AMSWWAFIFPLGAYVASSHLV), and 312–332 (IDYIGFGLYWLLFFFWAITLI).

The protein belongs to the tellurite-resistance/dicarboxylate transporter (TDT) family.

It localises to the cell membrane. This is an uncharacterized protein from Methanocaldococcus jannaschii (strain ATCC 43067 / DSM 2661 / JAL-1 / JCM 10045 / NBRC 100440) (Methanococcus jannaschii).